Reading from the N-terminus, the 400-residue chain is Argininosuccinate synthase (400 aa).

ATP is bound by residues 10-18 (AYSGGVDTS) and Ala-38. Tyr-89 serves as a coordination point for L-citrulline. Gly-119 lines the ATP pocket. Residues Thr-121, Asn-125, and Asp-126 each contribute to the L-aspartate site. Asn-125 is an L-citrulline binding site. Arg-129, Ser-177, Ser-186, Glu-262, and Tyr-274 together coordinate L-citrulline.

Belongs to the argininosuccinate synthase family. Type 1 subfamily. In terms of assembly, homotetramer.

The protein localises to the cytoplasm. The catalysed reaction is L-citrulline + L-aspartate + ATP = 2-(N(omega)-L-arginino)succinate + AMP + diphosphate + H(+). It functions in the pathway amino-acid biosynthesis; L-arginine biosynthesis; L-arginine from L-ornithine and carbamoyl phosphate: step 2/3. This Nostoc punctiforme (strain ATCC 29133 / PCC 73102) protein is Argininosuccinate synthase.